Here is a 657-residue protein sequence, read N- to C-terminus: MLYPQDFDVIVVGGGHAGTEAALAAARMGSRTLLLTHNIETLGQMSCNPSIGGIGKGHLVKEVDALGGAMALATDEAGIQFRILNSSKGPAVRATRAQADRILYKAAIRRMLENQPNLWLFQQAVDDLMVEGDRVVGAVTQVGIRFRSRAVVLTAGTFLDGKIHVGLNNYAAGRAGDPPAVSLSARLKELQLPQGRLKTGTPPRIDGRSIDFSQCEEQPGDGMPGGVNEGAVPVFSFMGNAAMHPRQVPCWITHTNARTHEIIRSGFDRSPMFTGKIEGVGPRYCPSVEDKINRFADKESHQIFLEPEGLTTHEFYPNGISTSLPFDIQYDLVRSMRGLENAHILRPGYAIEYDYFDPRSLKSSFETRQIQGLFFAGQINGTTGYEEAAAQGLFAGINAALQCRGERAWVPARDEAYLGVLVDDLITKGVTEPYRMFTSRAEFRLQLREDNADMRLTDAGRRMGLVDDARWDAFSRKRDAVSRETERLKSTWVNPRNLPTVEAERVLGKAIEHEYNLFDLLRRPDVGYDALTTMDGGKYASEAVSRETLGELSAPVIEQVEIAAKYAGYIERQRDEVQRAAHFEKLRLPEDLDYMQVAALSIEVRQKLQKHRPETLGQASRISGVTPAAISLLMVHLKKGGFKGFAPQPADGVETVA.

13 to 18 (GGGHAG) provides a ligand contact to FAD. 281–295 (GPRYCPSVEDKINRF) contributes to the NAD(+) binding site.

This sequence belongs to the MnmG family. As to quaternary structure, homodimer. Heterotetramer of two MnmE and two MnmG subunits. FAD serves as cofactor.

It localises to the cytoplasm. Functionally, NAD-binding protein involved in the addition of a carboxymethylaminomethyl (cmnm) group at the wobble position (U34) of certain tRNAs, forming tRNA-cmnm(5)s(2)U34. This Acidovorax ebreus (strain TPSY) (Diaphorobacter sp. (strain TPSY)) protein is tRNA uridine 5-carboxymethylaminomethyl modification enzyme MnmG.